Consider the following 357-residue polypeptide: Protein-L-isoaspartate O-methyltransferase domain-containing protein 1 (357 aa).

Gly2 is lipidated: N-myristoyl glycine. Residue Ser64 is part of the active site. 3 adoMet binding motif regions span residues 85–94 (LNLGSGTGYL), 160–164 (YDRIY), and 181–191 (LKVGGILVMPI). The segment at 240–250 (VRNLQDLARIY) is BC-box. The disordered stretch occupies residues 299–333 (PLDSEEDEKMEEDNKEEEEKDHNEAMKPEEPPQNL). Over residues 301–317 (DSEEDEKMEEDNKEEEE) the composition is skewed to acidic residues. The span at 318 to 333 (KDHNEAMKPEEPPQNL) shows a compositional bias: basic and acidic residues. The tract at residues 341 to 344 (LPLP) is CUL-box.

It belongs to the methyltransferase superfamily. L-isoaspartyl/D-aspartyl protein methyltransferase family. As to quaternary structure, component of the probable ECS(PCMTD1) E3 ubiquitin-protein ligase complex, at least composed of CUL5, ELOB, ELOC, RBX2 and PCMTD1. Interacts (via the BC-box) with ELOB and ELOC; the interaction is direct and stabilizes PCMTD1.

The protein resides in the cytoplasm. It localises to the membrane. Substrate recognition component of an ECS (Elongin BC-CUL5-SOCS-box protein) E3 ubiquitin ligase complex which mediates the ubiquitination and subsequent proteasomal degradation of target proteins. Specifically binds to the methyltransferase cofactor S-adenosylmethionine (AdoMet) via the N-terminal AdoMet binding motif, but does not display methyltransferase activity. May provide an alternate maintenance pathway for modified proteins by acting as a damage-specific E3 ubiquitin ligase adaptor protein. The polypeptide is Protein-L-isoaspartate O-methyltransferase domain-containing protein 1 (Homo sapiens (Human)).